The chain runs to 62 residues: Large ribosomal subunit protein bL28 (62 aa).

It belongs to the bacterial ribosomal protein bL28 family.

The protein is Large ribosomal subunit protein bL28 of Koribacter versatilis (strain Ellin345).